The chain runs to 889 residues: Coatomer subunit gamma-2 (889 aa).

5 HEAT repeats span residues valine 67–alanine 102, aspartate 103–leucine 140, arginine 289–leucine 326, valine 328–glutamate 360, and serine 361–leucine 398. Residues proline 596 to proline 617 are disordered.

It belongs to the COPG family. As to quaternary structure, oligomeric complex that consists of at least the alpha, beta, beta', gamma, delta, epsilon and zeta subunits.

Its subcellular location is the cytoplasm. The protein resides in the golgi apparatus membrane. The protein localises to the cytoplasmic vesicle. It localises to the COPI-coated vesicle membrane. Its function is as follows. The coatomer is a cytosolic protein complex that binds to dilysine motifs and reversibly associates with Golgi non-clathrin-coated vesicles, which further mediate biosynthetic protein transport from the ER, via the Golgi up to the trans Golgi network. Coatomer complex is required for budding from Golgi membranes, and is essential for the retrograde Golgi-to-ER transport of dilysine-tagged proteins. This chain is Coatomer subunit gamma-2, found in Oryza sativa subsp. japonica (Rice).